The sequence spans 113 residues: Inner membrane protein YiaB (113 aa).

At Met-1–Lys-9 the chain is on the cytoplasmic side. A helical membrane pass occupies residues Leu-10–Leu-20. Over Val-21–Lys-33 the chain is Periplasmic. A helical membrane pass occupies residues Gly-34–Leu-51. Topologically, residues Arg-52–Asp-61 are cytoplasmic. The chain crosses the membrane as a helical span at residues Phe-62–Val-82. The Periplasmic segment spans residues Leu-83–Asn-84. The helical transmembrane segment at Ala-85–Gly-105 threads the bilayer. Over Gln-106–Ala-113 the chain is Cytoplasmic.

The protein resides in the cell inner membrane. The protein is Inner membrane protein YiaB (yiaB) of Escherichia coli (strain K12).